The chain runs to 522 residues: Protein disulfide-isomerase (522 aa).

The or 22 signal peptide spans 1–28 (MKFSAGAVLSWSSLLLASSVFAQQEAVA). The region spanning 29–141 (PEDSAVVKLA…VQFMIKQSQP (113 aa)) is the Thioredoxin 1 domain. Catalysis depends on nucleophile residues Cys-61 and Cys-64. A disulfide bridge connects residues Cys-61 and Cys-64. N-linked (GlcNAc...) asparagine glycosylation is found at Asn-82, Asn-117, Asn-155, and Asn-174. Positions 356–485 (FLKGDASPIV…LFDFIKENGH (130 aa)) constitute a Thioredoxin 2 domain. Catalysis depends on nucleophile residues Cys-406 and Cys-409. Cys-406 and Cys-409 are disulfide-bonded. A glycan (N-linked (GlcNAc...) asparagine) is linked at Asn-425. Positions 497–522 (AQEKAAEEADADAELADEEDAIHDEL) are disordered. Over residues 504–522 (EADADAELADEEDAIHDEL) the composition is skewed to acidic residues. The short motif at 519 to 522 (HDEL) is the Prevents secretion from ER element.

It belongs to the protein disulfide isomerase family. As to quaternary structure, interacts with EPS1, KAR2 and MNL1. In terms of processing, the N-terminus is blocked.

The protein resides in the endoplasmic reticulum lumen. The catalysed reaction is Catalyzes the rearrangement of -S-S- bonds in proteins.. Functionally, protein disulfide isomerase of ER lumen required for formation of disulfide bonds in secretory and cell-surface proteins and which unscrambles non-native disulfide bonds. Forms a complex with MNL1 to process unfolded protein-bound Man8GlcNAc2 oligosaccharides to Man7GlcNAc2, promoting degradation in unfolded protein response. This is Protein disulfide-isomerase (PDI1) from Saccharomyces cerevisiae (strain ATCC 204508 / S288c) (Baker's yeast).